Here is a 219-residue protein sequence, read N- to C-terminus: Tetratricopeptide repeat protein 9A (219 aa).

The segment at 1–49 is disordered; the sequence is MERKGLAARSSGNPSPPALGEGPRPVPPPCVPSGGGAPERGQAGTAAEP. Residues 56-89 form a TPR 1 repeat; it reads AHEFKSQGAQCYKDKKFREAIGKYHRALLELKGL. The disordered stretch occupies residues 94–115; sequence EERDARPASSAGVPKSSRLSEE. The residue at position 102 (serine 102) is a Phosphoserine. TPR repeat units follow at residues 125 to 160 and 161 to 194; these read IDCYNSLAACLLQAELVNYERVKEYCLKVLKKEGEN and FKALYRSGVAFYHLGDYDKALYYLKEARTRQPTD.

It belongs to the TTC9 family.

The polypeptide is Tetratricopeptide repeat protein 9A (Ttc9) (Mus musculus (Mouse)).